Consider the following 473-residue polypeptide: ATP synthase subunit beta (473 aa).

158–165 (GGAGVGKT) contributes to the ATP binding site.

Belongs to the ATPase alpha/beta chains family. As to quaternary structure, F-type ATPases have 2 components, CF(1) - the catalytic core - and CF(0) - the membrane proton channel. CF(1) has five subunits: alpha(3), beta(3), gamma(1), delta(1), epsilon(1). CF(0) has three main subunits: a(1), b(2) and c(9-12). The alpha and beta chains form an alternating ring which encloses part of the gamma chain. CF(1) is attached to CF(0) by a central stalk formed by the gamma and epsilon chains, while a peripheral stalk is formed by the delta and b chains.

Its subcellular location is the cell membrane. It catalyses the reaction ATP + H2O + 4 H(+)(in) = ADP + phosphate + 5 H(+)(out). In terms of biological role, produces ATP from ADP in the presence of a proton gradient across the membrane. The catalytic sites are hosted primarily by the beta subunits. In Anoxybacillus flavithermus (strain DSM 21510 / WK1), this protein is ATP synthase subunit beta.